A 211-amino-acid chain; its full sequence is Glycerol-3-phosphate acyltransferase (211 aa).

5 helical membrane-spanning segments follow: residues 5–25 (VILG…TGYL), 55–75 (GPGL…ILVA), 85–105 (PVPA…AVLA), 126–146 (VLLA…LVVL), and 168–188 (WFFT…AFVI).

The protein belongs to the PlsY family. Probably interacts with PlsX.

It localises to the cell inner membrane. It carries out the reaction an acyl phosphate + sn-glycerol 3-phosphate = a 1-acyl-sn-glycero-3-phosphate + phosphate. It participates in lipid metabolism; phospholipid metabolism. Catalyzes the transfer of an acyl group from acyl-phosphate (acyl-PO(4)) to glycerol-3-phosphate (G3P) to form lysophosphatidic acid (LPA). This enzyme utilizes acyl-phosphate as fatty acyl donor, but not acyl-CoA or acyl-ACP. The protein is Glycerol-3-phosphate acyltransferase of Thermosynechococcus vestitus (strain NIES-2133 / IAM M-273 / BP-1).